Consider the following 98-residue polypeptide: Venom toxin OcyC11 (98 aa).

The first 20 residues, 1–20 (MKIACTLVLFVMLRCYVNAR), serve as a signal peptide directing secretion.

Contains 4 disulfide bonds. In terms of tissue distribution, expressed by the venom gland.

It localises to the secreted. This chain is Venom toxin OcyC11, found in Opisthacanthus cayaporum (South American scorpion).